The primary structure comprises 484 residues: Probable sphingolipid transporter spinster homolog 2 (484 aa).

The tract at residues 1-23 (MDVDGEGDRGQNPRIMERDSDSI) is disordered. The chain crosses the membrane as a helical span at residues 38–58 (LLFVFCVVNLINYIDRGAIAS). 2 N-linked (GlcNAc...) asparagine glycosylation sites follow: N62 and N85. The next 11 helical transmembrane spans lie at 93-113 (VLSSAFMVGLLVASPIFASLA), 122-142 (IGVGLSIWTLAVIGCGLSFDF), 147-167 (ICRMFVGVGEASFVSLAAPFI), 181-201 (AVFYMCIPTGYAFGYVYGGVV), 209-229 (AAFWGEAILMLPFAVLGFVIK), 273-293 (VYVTNILGYIAYNFVLGAYSY), 311-331 (IFGGVTVVCGIVGTLSGGVIL), 345-362 (LSVSTFIGAIFCFAAFCF), 377-397 (LLVFATQGPVNFIVLHCVKPS), 405-425 (MSTVSIHIFGDVPSSPLVGVL), and 436-456 (SLVLTFVLFPAAAIWSIGIFL). S466 is subject to Phosphoserine.

The protein belongs to the major facilitator superfamily. Spinster (TC 2.A.1.49) family.

It localises to the late endosome membrane. The protein resides in the lysosome membrane. Probable sphingolipid transporter that plays a central role in endosomes and/or lysosomes storage. This chain is Probable sphingolipid transporter spinster homolog 2, found in Arabidopsis thaliana (Mouse-ear cress).